The sequence spans 648 residues: DNA gyrase subunit B (648 aa).

In terms of domain architecture, Toprim spans 427–541; the sequence is TELFIVEGDS…AGYVYIAQPP (115 aa). Residues Glu-433, Asp-506, and Asp-508 each contribute to the Mg(2+) site.

Belongs to the type II topoisomerase GyrB family. Heterotetramer, composed of two GyrA and two GyrB chains. In the heterotetramer, GyrA contains the active site tyrosine that forms a transient covalent intermediate with DNA, while GyrB binds cofactors and catalyzes ATP hydrolysis. Mg(2+) is required as a cofactor. It depends on Mn(2+) as a cofactor. The cofactor is Ca(2+).

It is found in the cytoplasm. It catalyses the reaction ATP-dependent breakage, passage and rejoining of double-stranded DNA.. Its function is as follows. A type II topoisomerase that negatively supercoils closed circular double-stranded (ds) DNA in an ATP-dependent manner to modulate DNA topology and maintain chromosomes in an underwound state. Negative supercoiling favors strand separation, and DNA replication, transcription, recombination and repair, all of which involve strand separation. Also able to catalyze the interconversion of other topological isomers of dsDNA rings, including catenanes and knotted rings. Type II topoisomerases break and join 2 DNA strands simultaneously in an ATP-dependent manner. This chain is DNA gyrase subunit B, found in Streptococcus pneumoniae serotype 4 (strain ATCC BAA-334 / TIGR4).